A 160-amino-acid polypeptide reads, in one-letter code: Anaerobic nitrite reductase AHB1 (160 aa).

The 150-residue stretch at 8–157 folds into the Globin domain; sequence VFTEEQEALV…LVAAIKAEMN (150 aa). Positions 41–45 match the Homodimerization motif; it reads EIAPT. Heme b contacts are provided by S51, K65, H69, R99, S103, and H104. The Homodimerization signature appears at 111-123; that stretch reads DEHFEVAKYALLE.

It belongs to the plant globin family. In terms of assembly, homodimer. Heme b serves as cofactor. Expressed in roots and rosette leaves.

Its subcellular location is the cytoplasm. The protein resides in the nucleus. The catalysed reaction is Fe(III)-heme b-[protein] + nitric oxide + H2O = Fe(II)-heme b-[protein] + nitrite + 2 H(+). Its function is as follows. Phytoglobin that reduces nitrite to nitric oxide (NO) under anoxic conditions (e.g. during flooding or in waterlogged soil). May not function as an oxygen storage or transport protein. Has an unusually high affinity for O(2) through an hexacoordinate heme iron because of a very low dissociation constant. This is Anaerobic nitrite reductase AHB1 from Arabidopsis thaliana (Mouse-ear cress).